The chain runs to 310 residues: uncharacterized protein (310 aa).

This is an uncharacterized protein from Methanocaldococcus jannaschii (strain ATCC 43067 / DSM 2661 / JAL-1 / JCM 10045 / NBRC 100440) (Methanococcus jannaschii).